A 281-amino-acid chain; its full sequence is NADPH-dependent 7-cyano-7-deazaguanine reductase (281 aa).

Substrate is bound at residue 86-88 (IES). 88–89 (SK) is a binding site for NADPH. The Thioimide intermediate role is filled by Cys189. The active-site Proton donor is the Asp196. 228 to 229 (HE) provides a ligand contact to substrate. Position 257–258 (257–258 (RG)) interacts with NADPH.

Belongs to the GTP cyclohydrolase I family. QueF type 2 subfamily. Homodimer.

Its subcellular location is the cytoplasm. It carries out the reaction 7-aminomethyl-7-carbaguanine + 2 NADP(+) = 7-cyano-7-deazaguanine + 2 NADPH + 3 H(+). It functions in the pathway tRNA modification; tRNA-queuosine biosynthesis. In terms of biological role, catalyzes the NADPH-dependent reduction of 7-cyano-7-deazaguanine (preQ0) to 7-aminomethyl-7-deazaguanine (preQ1). The protein is NADPH-dependent 7-cyano-7-deazaguanine reductase of Mannheimia succiniciproducens (strain KCTC 0769BP / MBEL55E).